We begin with the raw amino-acid sequence, 158 residues long: Small ribosomal subunit protein uS7 (158 aa).

Belongs to the universal ribosomal protein uS7 family. Part of the 30S ribosomal subunit. Contacts proteins S9 and S11.

In terms of biological role, one of the primary rRNA binding proteins, it binds directly to 16S rRNA where it nucleates assembly of the head domain of the 30S subunit. Is located at the subunit interface close to the decoding center, probably blocks exit of the E-site tRNA. In Bacteroides fragilis (strain YCH46), this protein is Small ribosomal subunit protein uS7.